The sequence spans 216 residues: Vacuolar iron transporter homolog 4 (216 aa).

Residues 1 to 29 (MAATNGDAELTVAEEAKEEEEATDDGGGG) form a disordered region. Over 1-36 (MAATNGDAELTVAEEAKEEEEATDDGGGGVSSQWLR) the chain is Cytoplasmic. A helical transmembrane segment spans residues 37–57 (AAVLGASDGLVSTAALMLGIG). Topologically, residues 58-65 (AARPADAR) are vacuolar. The helical transmembrane segment at 66–86 (AVLLSGLAGLVAGACSMAIGE) threads the bilayer. At 87 to 134 (YVSVHVQLDVELADLERRRRRGGPAPAGLGLHAAAAAVSRPGQAAAAS) the chain is on the cytoplasmic side. Residues 135–155 (ALSFAAGAALPLLAAWFVAGA) traverse the membrane as a helical segment. Residues 156–157 (YR) are Vacuolar-facing. Residues 158–178 (VRVVVVVATASLALAAFGAAG) traverse the membrane as a helical segment. Residues 179–190 (ARLGRAPGGRAG) lie on the Cytoplasmic side of the membrane. Residues 191–211 (LRVVVGGLLAMAATYGVMKLF) traverse the membrane as a helical segment. Over 212–216 (RTHGV) the chain is Vacuolar.

This sequence belongs to the CCC1 family.

Its subcellular location is the vacuole membrane. The catalysed reaction is Fe(2+)(in) = Fe(2+)(out). Its function is as follows. Probable vacuolar iron transporter that may be involved in the regulation of iron distribution throughout the plant. In Oryza sativa subsp. japonica (Rice), this protein is Vacuolar iron transporter homolog 4.